We begin with the raw amino-acid sequence, 85 residues long: Large ribosomal subunit protein bL27 (85 aa).

This sequence belongs to the bacterial ribosomal protein bL27 family.

The polypeptide is Large ribosomal subunit protein bL27 (Ruthia magnifica subsp. Calyptogena magnifica).